We begin with the raw amino-acid sequence, 256 residues long: Pimeloyl-[acyl-carrier protein] methyl ester esterase (256 aa).

Residues 15–242 (HLVLLHGWGL…AAHAPFISHP (228 aa)) form the AB hydrolase-1 domain. Residues Trp22, 82–83 (SL), and 143–147 (FLALQ) contribute to the substrate site. The active-site Nucleophile is Ser82. Residues Asp207 and His235 contribute to the active site. His235 serves as a coordination point for substrate.

It belongs to the AB hydrolase superfamily. Carboxylesterase BioH family. As to quaternary structure, monomer.

The protein localises to the cytoplasm. The enzyme catalyses 6-carboxyhexanoyl-[ACP] methyl ester + H2O = 6-carboxyhexanoyl-[ACP] + methanol + H(+). It functions in the pathway cofactor biosynthesis; biotin biosynthesis. The physiological role of BioH is to remove the methyl group introduced by BioC when the pimeloyl moiety is complete. It allows to synthesize pimeloyl-ACP via the fatty acid synthetic pathway through the hydrolysis of the ester bonds of pimeloyl-ACP esters. The sequence is that of Pimeloyl-[acyl-carrier protein] methyl ester esterase from Escherichia coli O7:K1 (strain IAI39 / ExPEC).